Here is a 230-residue protein sequence, read N- to C-terminus: Protein LURP-one-related 11 (230 aa).

Belongs to the LOR family.

Functionally, might be related to the phospholipid scramblase and tubby-like superfamily of membrane tethered transcription factors. This chain is Protein LURP-one-related 11, found in Arabidopsis thaliana (Mouse-ear cress).